Here is a 127-residue protein sequence, read N- to C-terminus: Fluoride-specific ion channel FluC 1 (127 aa).

Transmembrane regions (helical) follow at residues 3–23 (LLIV…VGQW), 35–55 (IAML…FGLY), 74–94 (IGFF…VLLI), and 102–122 (LFSY…LGFY). The Na(+) site is built by Gly-78 and Thr-81.

It belongs to the fluoride channel Fluc/FEX (TC 1.A.43) family.

It is found in the cell membrane. It carries out the reaction fluoride(in) = fluoride(out). With respect to regulation, na(+) is not transported, but it plays an essential structural role and its presence is essential for fluoride channel function. Functionally, fluoride-specific ion channel. Important for reducing fluoride concentration in the cell, thus reducing its toxicity. The sequence is that of Fluoride-specific ion channel FluC 1 from Halalkalibacterium halodurans (strain ATCC BAA-125 / DSM 18197 / FERM 7344 / JCM 9153 / C-125) (Bacillus halodurans).